The following is a 255-amino-acid chain: Pimeloyl-[acyl-carrier protein] methyl ester esterase (255 aa).

An AB hydrolase-1 domain is found at 16-242 (LVLLHGWGLN…AAHAPFISHP (227 aa)). Substrate is bound by residues Trp-22, 82 to 83 (SL), and 143 to 147 (FLALQ). Residue Ser-82 is the Nucleophile of the active site. Active-site residues include Asp-207 and His-235. Position 235 (His-235) interacts with substrate.

The protein belongs to the AB hydrolase superfamily. Carboxylesterase BioH family. Monomer.

Its subcellular location is the cytoplasm. It carries out the reaction 6-carboxyhexanoyl-[ACP] methyl ester + H2O = 6-carboxyhexanoyl-[ACP] + methanol + H(+). It participates in cofactor biosynthesis; biotin biosynthesis. Functionally, the physiological role of BioH is to remove the methyl group introduced by BioC when the pimeloyl moiety is complete. It allows to synthesize pimeloyl-ACP via the fatty acid synthetic pathway through the hydrolysis of the ester bonds of pimeloyl-ACP esters. In Pectobacterium carotovorum subsp. carotovorum (strain PC1), this protein is Pimeloyl-[acyl-carrier protein] methyl ester esterase.